We begin with the raw amino-acid sequence, 509 residues long: MSENLDKSHVDEAGEAEAAASEQGLEGALECSDETLQKKVKSDSPSSQRVGRPHSSPARLVTVEELLETAKGVTNMALAHEIVVTGDFRINAVELAEGSLEKRVKEIVHKAFWDCLSVQLSEEPPTYDHAIKLVGEIKETLLSFLLPGHTRLRNQITEVLDLELIKQEAENGALDISKLAEFIIGMMGILCAPARDEEVKKLKGIKEIVPLFRAIFSVLDLMKVDMANFAISSIRPHLMQQSVEYERRKFQEVLERQPNSLDFATQWLEEATNDLLSQKYKHALPAGGGAAGSGDAPLLTPVSVQNFAYLKLLKWDHFQRPFPETVLMDQSRFQELQLQLEQLAVLGAVLLVTFSTAAPGISGHADFAEKLKMMVKTLLTDMHLPSFHLEDALASIGEKVCLEVSSCLSLCGSSPFSVAKETVLKGQIQALASPEDPIRRIMESRIFTFLETYLASGHQKPLPTVPGGLGPIQKELEEVAVKFVRLVNYNKMVFCPYYDAILSKLLLRS.

Over residues 1 to 12 the composition is skewed to basic and acidic residues; it reads MSENLDKSHVDE. A disordered region spans residues 1–57; that stretch reads MSENLDKSHVDEAGEAEAAASEQGLEGALECSDETLQKKVKSDSPSSQRVGRPHSSP. Low complexity predominate over residues 16–30; the sequence is AEAAASEQGLEGALE. Ser56 carries the phosphoserine modification.

Belongs to the TCP11 family.

The chain is T-complex protein 11-like protein 1 (Tcp11l1) from Mus musculus (Mouse).